Reading from the N-terminus, the 30-residue chain is Fimbrial assembly protein, serogroup B1 (30 aa).

This Dichelobacter nodosus (Bacteroides nodosus) protein is Fimbrial assembly protein, serogroup B1 (fimB).